The sequence spans 178 residues: Large ribosomal subunit protein bL25 (178 aa).

Belongs to the bacterial ribosomal protein bL25 family. CTC subfamily. As to quaternary structure, part of the 50S ribosomal subunit; part of the 5S rRNA/L5/L18/L25 subcomplex. Contacts the 5S rRNA. Binds to the 5S rRNA independently of L5 and L18.

Its function is as follows. This is one of the proteins that binds to the 5S RNA in the ribosome where it forms part of the central protuberance. The chain is Large ribosomal subunit protein bL25 from Campylobacter jejuni subsp. jejuni serotype O:6 (strain 81116 / NCTC 11828).